We begin with the raw amino-acid sequence, 570 residues long: Sulfite reductase [NADPH] hemoprotein beta-component (570 aa).

[4Fe-4S] cluster contacts are provided by C434, C440, C479, and C483. Position 483 (C483) interacts with siroheme.

Belongs to the nitrite and sulfite reductase 4Fe-4S domain family. As to quaternary structure, alpha(8)-beta(8). The alpha component is a flavoprotein, the beta component is a hemoprotein. Siroheme serves as cofactor. [4Fe-4S] cluster is required as a cofactor.

It carries out the reaction hydrogen sulfide + 3 NADP(+) + 3 H2O = sulfite + 3 NADPH + 4 H(+). Its pathway is sulfur metabolism; hydrogen sulfide biosynthesis; hydrogen sulfide from sulfite (NADPH route): step 1/1. Component of the sulfite reductase complex that catalyzes the 6-electron reduction of sulfite to sulfide. This is one of several activities required for the biosynthesis of L-cysteine from sulfate. This chain is Sulfite reductase [NADPH] hemoprotein beta-component, found in Escherichia fergusonii (strain ATCC 35469 / DSM 13698 / CCUG 18766 / IAM 14443 / JCM 21226 / LMG 7866 / NBRC 102419 / NCTC 12128 / CDC 0568-73).